The sequence spans 107 residues: Putative double-stranded DNA mimic protein ECA2319 (107 aa).

The protein belongs to the putative dsDNA mimic protein family.

Functionally, may act as a double-stranded DNA (dsDNA) mimic. Probably regulates the activity of a dsDNA-binding protein. This Pectobacterium atrosepticum (strain SCRI 1043 / ATCC BAA-672) (Erwinia carotovora subsp. atroseptica) protein is Putative double-stranded DNA mimic protein ECA2319.